We begin with the raw amino-acid sequence, 307 residues long: Ornithine carbamoyltransferase (307 aa).

Carbamoyl phosphate contacts are provided by residues 51–54 (STRT), Gln78, Arg102, and 129–132 (HPVQ). Residues Asn159, Asp223, and 227–228 (SM) each bind L-ornithine. Carbamoyl phosphate-binding positions include 263–264 (CL) and Arg291.

The protein belongs to the aspartate/ornithine carbamoyltransferase superfamily. OTCase family.

The protein localises to the cytoplasm. It catalyses the reaction carbamoyl phosphate + L-ornithine = L-citrulline + phosphate + H(+). It participates in amino-acid biosynthesis; L-arginine biosynthesis; L-arginine from L-ornithine and carbamoyl phosphate: step 1/3. Functionally, reversibly catalyzes the transfer of the carbamoyl group from carbamoyl phosphate (CP) to the N(epsilon) atom of ornithine (ORN) to produce L-citrulline. In Wolinella succinogenes (strain ATCC 29543 / DSM 1740 / CCUG 13145 / JCM 31913 / LMG 7466 / NCTC 11488 / FDC 602W) (Vibrio succinogenes), this protein is Ornithine carbamoyltransferase.